We begin with the raw amino-acid sequence, 137 residues long: Ubiquitin-conjugating enzyme variant MMS2 (137 aa).

The UBC core domain occupies 5–137 (PRNFRLLEEL…LRQPKEGETF (133 aa)). A Phosphoserine modification is found at Ser-71.

It belongs to the ubiquitin-conjugating enzyme family. Heterodimer with UBC13.

Has a role in the DNA error-free postreplication repair (PRR) pathway. Lacks catalytic activity by itself. The UBC13/MMS2 heterodimer catalyzes the synthesis of non-canonical poly-ubiquitin chains that are linked through 'Lys-63'. In Saccharomyces cerevisiae (strain ATCC 204508 / S288c) (Baker's yeast), this protein is Ubiquitin-conjugating enzyme variant MMS2 (MMS2).